Consider the following 754-residue polypeptide: 5-methyltetrahydropteroyltriglutamate--homocysteine methyltransferase (754 aa).

Residues 17 to 20 (RELK) and lysine 117 contribute to the 5-methyltetrahydropteroyltri-L-glutamate site. Residues 431–433 (IGS) and glutamate 484 each bind L-homocysteine. Residues 431 to 433 (IGS) and glutamate 484 each bind L-methionine. Residues 515-516 (RC) and tryptophan 561 each bind 5-methyltetrahydropteroyltri-L-glutamate. An L-homocysteine-binding site is contributed by aspartate 599. Aspartate 599 provides a ligand contact to L-methionine. Glutamate 605 contributes to the 5-methyltetrahydropteroyltri-L-glutamate binding site. Residues histidine 641, cysteine 643, and glutamate 665 each contribute to the Zn(2+) site. The active-site Proton donor is histidine 694. Zn(2+) is bound at residue cysteine 726.

This sequence belongs to the vitamin-B12 independent methionine synthase family. Zn(2+) serves as cofactor.

The enzyme catalyses 5-methyltetrahydropteroyltri-L-glutamate + L-homocysteine = tetrahydropteroyltri-L-glutamate + L-methionine. It functions in the pathway amino-acid biosynthesis; L-methionine biosynthesis via de novo pathway; L-methionine from L-homocysteine (MetE route): step 1/1. Its function is as follows. Catalyzes the transfer of a methyl group from 5-methyltetrahydrofolate to homocysteine resulting in methionine formation. In Salmonella paratyphi B (strain ATCC BAA-1250 / SPB7), this protein is 5-methyltetrahydropteroyltriglutamate--homocysteine methyltransferase.